A 1234-amino-acid chain; its full sequence is PAN2-PAN3 deadenylation complex catalytic subunit PAN2 (1234 aa).

Positions 12–32 (LKNSNNNSNSNSSSNNSSNGV) are disordered. The segment covering 14–30 (NSNNNSNSNSSSNNSSN) has biased composition (low complexity). WD repeat units follow at residues 176–213 (NHTG…SIKT), 272–315 (AFPA…VYHA), and 342–381 (QQQP…TLSK). The interval 323 to 346 (PLPPAGSSAAQQQKQQQQQQQQPH) is disordered. Over residues 333–344 (QQQKQQQQQQQQ) the composition is skewed to low complexity. Positions 383 to 537 (FVNFPQEIER…DSIFQCQNDE (155 aa)) are linker. The region spanning 538 to 946 (KIPNCYSRLQ…KPVIVIYQEV (409 aa)) is the USP domain. The tract at residues 751–775 (PNTQQDQQQQQQQQQQQQQQQQPTN) is disordered. The segment covering 754 to 772 (QQDQQQQQQQQQQQQQQQQ) has biased composition (low complexity). 4 residues coordinate a divalent metal cation: Asp1004, Glu1006, Asp1138, and Asp1191. Residues 1072–1199 (GEAFIDDYIV…EDARTALLLY (128 aa)) enclose the Exonuclease domain.

It belongs to the peptidase C19 family. PAN2 subfamily. In terms of assembly, forms a heterotrimer with an asymmetric homodimer of the regulatory subunit PAN3 to form the poly(A)-nuclease (PAN) deadenylation complex. A divalent metal cation serves as cofactor.

It localises to the cytoplasm. It carries out the reaction Exonucleolytic cleavage of poly(A) to 5'-AMP.. Positively regulated by the regulatory subunit PAN3. Its function is as follows. Catalytic subunit of the poly(A)-nuclease (PAN) deadenylation complex, one of two cytoplasmic mRNA deadenylases involved in mRNA turnover. PAN specifically shortens poly(A) tails of RNA and the activity is stimulated by poly(A)-binding protein PAB1. PAN deadenylation is followed by rapid degradation of the shortened mRNA tails by the CCR4-NOT complex. Deadenylated mRNAs are then degraded by two alternative mechanisms, namely exosome-mediated 3'-5' exonucleolytic degradation, or deadenylation-dependent mRNA decaping and subsequent 5'-3' exonucleolytic degradation by XRN1. May also be involved in post-transcriptional maturation of mRNA poly(A) tails. This Lodderomyces elongisporus (strain ATCC 11503 / CBS 2605 / JCM 1781 / NBRC 1676 / NRRL YB-4239) (Yeast) protein is PAN2-PAN3 deadenylation complex catalytic subunit PAN2.